The following is a 592-amino-acid chain: Syntaxin-binding protein 3 (592 aa).

The interval 1–255 is mediates interaction with DOC2B; it reads MAPPVSERGL…STVLHELTFQ (255 aa).

It belongs to the STXBP/unc-18/SEC1 family. As to quaternary structure, interacts with STX4. Interacts with DOC2B; the interaction is direct, occurs at the cell membrane, excludes interaction with STX4 and regulates glucose-stimulated insulin secretion. Post-translationally, phosphorylated by PKC in platelets in response to thrombin stimulation; phosphorylation inhibits binding to STX4. Ubiquitously expressed in all tissues tested.

Its subcellular location is the cytoplasm. It localises to the cytosol. The protein resides in the cell membrane. Together with STX4 and VAMP2, may play a role in insulin-dependent movement of GLUT4 and in docking/fusion of intracellular GLUT4-containing vesicles with the cell surface in adipocytes. The polypeptide is Syntaxin-binding protein 3 (Stxbp3) (Mus musculus (Mouse)).